We begin with the raw amino-acid sequence, 109 residues long: ATP synthase subunit c (109 aa).

The next 2 membrane-spanning stretches (helical) occupy residues 42-62 (YIGT…QGFS) and 88-108 (LALA…IIFV).

The protein belongs to the ATPase C chain family. F-type ATPases have 2 components, F(1) - the catalytic core - and F(0) - the membrane proton channel. F(1) has five subunits: alpha(3), beta(3), gamma(1), delta(1), epsilon(1). F(0) has three main subunits: a(1), b(2) and c(10-14). The alpha and beta chains form an alternating ring which encloses part of the gamma chain. F(1) is attached to F(0) by a central stalk formed by the gamma and epsilon chains, while a peripheral stalk is formed by the delta and b chains.

It is found in the cell membrane. In terms of biological role, f(1)F(0) ATP synthase produces ATP from ADP in the presence of a proton or sodium gradient. F-type ATPases consist of two structural domains, F(1) containing the extramembraneous catalytic core and F(0) containing the membrane proton channel, linked together by a central stalk and a peripheral stalk. During catalysis, ATP synthesis in the catalytic domain of F(1) is coupled via a rotary mechanism of the central stalk subunits to proton translocation. Its function is as follows. Key component of the F(0) channel; it plays a direct role in translocation across the membrane. A homomeric c-ring of between 10-14 subunits forms the central stalk rotor element with the F(1) delta and epsilon subunits. This Ureaplasma urealyticum serovar 10 (strain ATCC 33699 / Western) protein is ATP synthase subunit c.